We begin with the raw amino-acid sequence, 351 residues long: Foldase protein PrsA 1 (351 aa).

Residues 1-22 form the signal peptide; that stretch reads MKNSNKLIASVVTLASVMALAA. Residue cysteine 23 is the site of N-palmitoyl cysteine attachment. Cysteine 23 carries the S-diacylglycerol cysteine lipid modification. Residues 145–240 enclose the PpiC domain; the sequence is TPTMAVEMIT…KKFYIVKVTK (96 aa). 2 stretches are compositionally biased toward low complexity: residues 303–317 and 326–351; these read KTKAASESSTTSESS and ESEQTQTSSAEEPTETEAQTQEPAAQ. Residues 303–351 are disordered; the sequence is KTKAASESSTTSESSKAAEENPSESEQTQTSSAEEPTETEAQTQEPAAQ.

This sequence belongs to the PrsA family.

The protein localises to the cell membrane. It catalyses the reaction [protein]-peptidylproline (omega=180) = [protein]-peptidylproline (omega=0). In terms of biological role, plays a major role in protein secretion by helping the post-translocational extracellular folding of several secreted proteins. In Streptococcus pyogenes serotype M1, this protein is Foldase protein PrsA 1 (prsA1).